Consider the following 461-residue polypeptide: Kynurenine 3-monooxygenase (461 aa).

2 helical membrane passes run 395 to 415 (GFMN…VTFT) and 432 to 452 (ILSN…AIGI).

The protein belongs to the aromatic-ring hydroxylase family. KMO subfamily. The cofactor is FAD.

The protein resides in the mitochondrion. The protein localises to the membrane. It catalyses the reaction L-kynurenine + NADPH + O2 + H(+) = 3-hydroxy-L-kynurenine + NADP(+) + H2O. It functions in the pathway cofactor biosynthesis; NAD(+) biosynthesis; quinolinate from L-kynurenine: step 1/3. Functionally, catalyzes the hydroxylation of L-kynurenine (L-Kyn) to form 3-hydroxy-L-kynurenine (L-3OHKyn). Required for synthesis of quinolinic acid. The chain is Kynurenine 3-monooxygenase from Caenorhabditis briggsae.